The chain runs to 791 residues: Ribosome biogenesis protein ERB1 (791 aa).

Residues 1–12 (MARKNSSLNGSE) show a composition bias toward polar residues. Disordered regions lie at residues 1-60 (MARK…DDSD) and 68-87 (AEEE…SEEG). Acidic residues-rich tracts occupy residues 25 to 60 (ESEL…DDSD) and 69 to 87 (EEEN…SEEG). Residues 254-372 (RFVPSKHEAK…LRKVPGYSES (119 aa)) form a required for interaction with NOP7 region. The required for interaction with YTM1 stretch occupies residues 372-408 (SVRERFERSLDLYLAPRVRKNKLNIDPESLIPELPST). 7 WD repeats span residues 424–463 (GHKG…EVYQ), 472–512 (NNDD…FEIE), 576–618 (TCRK…TQSP), 621–659 (KSKG…LIKK), 662–701 (PGAR…TPYK), 705–744 (YHEK…DLMK), and 760–791 (VNSL…LWTT).

This sequence belongs to the WD repeat BOP1/ERB1 family. Component of the NOP7 complex, composed of ERB1, NOP7 and YTM1. The complex is held together by ERB1, which interacts with NOP7 via its N-terminal domain and with YTM1 via a high-affinity interaction between the seven-bladed beta-propeller domains of the 2 proteins. The NOP7 complex associates with the 66S pre-ribosome.

The protein resides in the nucleus. It is found in the nucleolus. It localises to the nucleoplasm. Functionally, component of the NOP7 complex, which is required for maturation of the 25S and 5.8S ribosomal RNAs and formation of the 60S ribosome. The sequence is that of Ribosome biogenesis protein ERB1 from Kluyveromyces lactis (strain ATCC 8585 / CBS 2359 / DSM 70799 / NBRC 1267 / NRRL Y-1140 / WM37) (Yeast).